Consider the following 355-residue polypeptide: Eukaryotic initiation factor 4A-13 (355 aa).

The Q motif motif lies at D40 to Q68. Residues I71–I241 form the Helicase ATP-binding domain. Residue A84–T91 participates in ATP binding. The DEAD box signature appears at D189–D192. The 104-residue stretch at G252 to D355 folds into the Helicase C-terminal domain.

It belongs to the DEAD box helicase family. eIF4A subfamily. As to quaternary structure, eIF4F is a multi-subunit complex, the composition of which varies with external and internal environmental conditions. It is composed of at least EIF4A, EIF4E and EIF4G.

It catalyses the reaction ATP + H2O = ADP + phosphate + H(+). Functionally, ATP-dependent RNA helicase which is a subunit of the eIF4F complex involved in cap recognition and is required for mRNA binding to ribosome. In the current model of translation initiation, eIF4A unwinds RNA secondary structures in the 5'-UTR of mRNAs which is necessary to allow efficient binding of the small ribosomal subunit, and subsequent scanning for the initiator codon. In Nicotiana tabacum (Common tobacco), this protein is Eukaryotic initiation factor 4A-13.